The chain runs to 174 residues: Ribosome maturation factor RimP (174 aa).

The protein belongs to the RimP family.

The protein resides in the cytoplasm. Its function is as follows. Required for maturation of 30S ribosomal subunits. This chain is Ribosome maturation factor RimP, found in Bdellovibrio bacteriovorus (strain ATCC 15356 / DSM 50701 / NCIMB 9529 / HD100).